Reading from the N-terminus, the 138-residue chain is Small ribosomal subunit protein uS11c (138 aa).

The interval 1-23 (MAKPIQRIGSRRNGPIGSRKNGR) is disordered.

The protein belongs to the universal ribosomal protein uS11 family. As to quaternary structure, part of the 30S ribosomal subunit.

The protein localises to the plastid. It is found in the chloroplast. The chain is Small ribosomal subunit protein uS11c from Platanus occidentalis (Sycamore).